A 454-amino-acid chain; its full sequence is Phosphoglucosamine mutase (454 aa).

Ser101 acts as the Phosphoserine intermediate in catalysis. Mg(2+)-binding residues include Ser101, Asp243, Asp245, and Asp247. Phosphoserine is present on Ser101.

The protein belongs to the phosphohexose mutase family. Mg(2+) serves as cofactor. Activated by phosphorylation.

The catalysed reaction is alpha-D-glucosamine 1-phosphate = D-glucosamine 6-phosphate. Functionally, catalyzes the conversion of glucosamine-6-phosphate to glucosamine-1-phosphate. This is Phosphoglucosamine mutase from Geotalea uraniireducens (strain Rf4) (Geobacter uraniireducens).